Here is a 391-residue protein sequence, read N- to C-terminus: Phosphoglycerate kinase (391 aa).

Residues 21-23, R36, 59-62, R113, and R146 contribute to the substrate site; these read DLN and HLGR. ATP is bound by residues K197, E319, and 345–348; that span reads GGDT.

The protein belongs to the phosphoglycerate kinase family. As to quaternary structure, monomer.

It is found in the cytoplasm. The enzyme catalyses (2R)-3-phosphoglycerate + ATP = (2R)-3-phospho-glyceroyl phosphate + ADP. It functions in the pathway carbohydrate degradation; glycolysis; pyruvate from D-glyceraldehyde 3-phosphate: step 2/5. This chain is Phosphoglycerate kinase, found in Xanthomonas oryzae pv. oryzae (strain PXO99A).